The primary structure comprises 156 residues: Transcription elongation factor GreA (156 aa).

Residues 2 to 78 (AKEIILTQEG…MISKAKLIED (77 aa)) adopt a coiled-coil conformation.

The protein belongs to the GreA/GreB family.

Its function is as follows. Necessary for efficient RNA polymerase transcription elongation past template-encoded arresting sites. The arresting sites in DNA have the property of trapping a certain fraction of elongating RNA polymerases that pass through, resulting in locked ternary complexes. Cleavage of the nascent transcript by cleavage factors such as GreA or GreB allows the resumption of elongation from the new 3'terminus. GreA releases sequences of 2 to 3 nucleotides. The polypeptide is Transcription elongation factor GreA (Mesoplasma florum (strain ATCC 33453 / NBRC 100688 / NCTC 11704 / L1) (Acholeplasma florum)).